We begin with the raw amino-acid sequence, 137 residues long: MNTTVSCELHLRLVVSSESSLPVPAGLRYDTADPYAVHATFHTGAEETVEWVFARDLLAEGLHRPTGTGDVRVWPSRSHGQGVVCIALSSPEGEALLEAPARALESFLKRTDAAVPPGTEHRHFDLDQELSHILAES.

Belongs to the SsgA family. Interacts with SsgA. Interacts with FtsZ (via N-terminus).

The protein localises to the cell septum. In terms of biological role, involved in sporulation-specific cell division. Required for early stages of sporulation. Important in the process of growth cessation prior to sporulation-specific cell division. Recruits cell division protein FtsZ to the future septum sites and tethers the contractile ring structure (Z ring) to the cytoplasmic membrane during sporulation. Stimulates polymerization and filament length of FtsZ in vitro. The polypeptide is Sporulation-specific cell division protein SsgB (Streptomyces coelicolor (strain ATCC BAA-471 / A3(2) / M145)).